A 528-amino-acid polypeptide reads, in one-letter code: Low affinity inorganic phosphate transporter 4 (528 aa).

At 1 to 18 the chain is on the cytoplasmic side; the sequence is MALEVLEALDSARTQWYH. Residues 19-39 traverse the membrane as a helical segment; it reads VTAIVIAGMGFFTDAYDLFCI. The Extracellular portion of the chain corresponds to 40-68; the sequence is TTVSKLLGRLYYFDPSTGKPGKLPNNVNN. Residues 69-89 traverse the membrane as a helical segment; sequence LVTGVALVGTLSGQLFFGYLG. At 90-96 the chain is on the cytoplasmic side; sequence DKLGRKK. Residues 97–117 traverse the membrane as a helical segment; the sequence is VYGVTLILMVACAICSGLSFG. Residues 118–122 are Extracellular-facing; that stretch reads ASAKS. A helical transmembrane segment spans residues 123–143; the sequence is VMGTLCFFRFWLGFGIGGDYP. Residues 144 to 158 lie on the Cytoplasmic side of the membrane; sequence LSATIMSEYANKRTR. A helical transmembrane segment spans residues 159–179; sequence GAFIAAVFAMQGVGIIFAGLV. Residues 180–208 lie on the Extracellular side of the membrane; it reads SMCLSAGFKASYHAPSFHDDPIMSTQPQG. Residues 209-229 form a helical membrane-spanning segment; that stretch reads DLMWRLVLMIGAVPAAMTYYW. Over 230 to 292 the chain is Cytoplasmic; it reads RMKMPETGRY…NEFFTRHGRH (63 aa). A helical transmembrane segment spans residues 293 to 313; sequence LIGTMTSWFLLDIAFYSQNLT. Topologically, residues 314–341 are extracellular; that stretch reads QKDIFPAMGLIDKDFEMNAIQEVFETSR. Residues 342-362 form a helical membrane-spanning segment; sequence AMFVIALFGTFPGYWFTVFFI. The Cytoplasmic segment spans residues 363–371; it reads EKLGRYKIQ. A helical transmembrane segment spans residues 372–392; sequence LIGFFMMSVFMFIIGVKYDYL. The Extracellular portion of the chain corresponds to 393-401; that stretch reads RNENSHMFA. Residues 402-422 traverse the membrane as a helical segment; it reads LLYGLTFFFANFGPNSTTFVL. Over 423-433 the chain is Cytoplasmic; it reads PAELFPTRVRS. Residues 434-454 form a helical membrane-spanning segment; it reads TCHALSAAAGKAGAMVGAFGI. Over 455-467 the chain is Extracellular; the sequence is QNYTQKGEQKQIK. A glycan (N-linked (GlcNAc...) asparagine) is linked at asparagine 456. A helical transmembrane segment spans residues 468-488; sequence HAMMILAVTNLIGFFCSFLVT. Topologically, residues 489–528 are cytoplasmic; sequence ETKGRSLEEISGEDGRESELTPTPPNNRVPTRQEPRSETM. Basic and acidic residues-rich tracts occupy residues 496–507 and 519–528; these read EEISGEDGRESE and TRQEPRSETM. The disordered stretch occupies residues 496 to 528; sequence EEISGEDGRESELTPTPPNNRVPTRQEPRSETM.

This sequence belongs to the major facilitator superfamily. Phosphate:H(+) symporter (TC 2.A.1.9) family. Expressed only in mycorrhizal roots, exclusively in cortical cells containing arbuscules, upon arbuscular mycorrhizal (AM) symbiosis with AM fungi (e.g. Gigaspora margarita and Funnelliformis mosseae). Also observed in root tips of non-mycorrhizal roots, in a phosphate (Pi) depended-manner, highest expression levels being observed in low Pi conditions.

The protein localises to the cell membrane. The catalysed reaction is phosphate(in) + H(+)(in) = phosphate(out) + H(+)(out). Low-affinity transporter for external inorganic phosphate (Pi) probably involved in the acquisition of phosphate released by arbuscular mycorrhizal (AM) fungi (e.g. Gigaspora margarita and Funnelliformis mosseae) during AM symbiosis; required for propper mycorrhizal arbuscule morphology. Acts as a Pi-sensing machinery at the root tip level, independently of AM fungi, involved in the regulation of early root branching and lateral roots formation. The sequence is that of Low affinity inorganic phosphate transporter 4 from Lotus japonicus (Lotus corniculatus var. japonicus).